The primary structure comprises 330 residues: G-protein coupled receptor 3 (330 aa).

Residues 1–42 (MMWGAGSPLAWLSAGSGNVNVSSVGPAEGPTGPAAPLPSPKA) are Extracellular-facing. Asn-20 carries N-linked (GlcNAc...) asparagine glycosylation. Residues 43–62 (WDVVLCISGTLVSCENALVV) traverse the membrane as a helical segment. Residues 63-74 (AIIVGTPAFRAP) are Cytoplasmic-facing. Residues 75–98 (MFLLVGSLAVADLLAGLGLVLHFA) form a helical membrane-spanning segment. Over 99 to 110 (AVFCIGSAEMSL) the chain is Extracellular. A helical transmembrane segment spans residues 111-132 (VLVGVLAMAFTASIGSLLAITV). At 133-153 (DRYLSLYNALTYYSETTVTRT) the chain is on the cytoplasmic side. Residues 154–173 (YVMLALVWGGALGLGLLPVL) traverse the membrane as a helical segment. The Extracellular portion of the chain corresponds to 174 to 198 (AWNCLDGLTTCGVVYPLSKNHLVVL). Residues 199 to 217 (AIAFFMVFGIMLQLYAQIC) traverse the membrane as a helical segment. The Cytoplasmic portion of the chain corresponds to 218-245 (RIVCRHAQQIALQRHLLPASHYVATRKG). Residues 246–272 (IATLAVVLGAFAACWLPFTVYCLLGDA) traverse the membrane as a helical segment. Residues 273–277 (HSPPL) lie on the Extracellular side of the membrane. The chain crosses the membrane as a helical span at residues 278 to 299 (YTYLTLLPATYNSMINPIIYAF). Topologically, residues 300–330 (RNQDVQKVLWAVCCCCSSSKIPFRSRSPSDV) are cytoplasmic. A lipid anchor (S-palmitoyl cysteine) is attached at Cys-313. 3 positions are modified to phosphoserine: Ser-324, Ser-326, and Ser-328.

It belongs to the G-protein coupled receptor 1 family. Expressed predominantly in the central nervous system, and at low levels in the lung, kidney, testis, ovary and eye. Highly expressed in regions of the brain implicated in the Alzheimer disease.

Its subcellular location is the cell membrane. Functionally, constitutively active G-protein coupled receptor that maintains high 3'-5'-cyclic adenosine monophosphate (cAMP) levels that a plays a role in serveral processes including meiotic arrest in oocytes or neuronal development via activation of numerous intracellular signaling pathways. Acts as an essential activator of thermogenic adipocytes and drives thermogenesis via its intrinsic G(s)-coupling activity without the requirement of a ligand. Has a potential role in modulating a number of brain functions, including behavioral responses to stress, amyloid-beta peptide generation in neurons. Stimulates neurite outgrowth in cerebellar granular neurons modulated via PKA, ERK, and most strongly PI3K-mediated signaling pathways. The protein is G-protein coupled receptor 3 (GPR3) of Homo sapiens (Human).